Consider the following 335-residue polypeptide: Nucleoid-associated protein YejK (335 aa).

Belongs to the YejK family.

The protein resides in the cytoplasm. It is found in the nucleoid. The protein is Nucleoid-associated protein YejK of Salmonella schwarzengrund (strain CVM19633).